Reading from the N-terminus, the 400-residue chain is Nicotinate phosphoribosyltransferase (400 aa).

Histidine 220 carries the post-translational modification Phosphohistidine; by autocatalysis.

This sequence belongs to the NAPRTase family. Post-translationally, transiently phosphorylated on a His residue during the reaction cycle. Phosphorylation strongly increases the affinity for substrates and increases the rate of nicotinate D-ribonucleotide production. Dephosphorylation regenerates the low-affinity form of the enzyme, leading to product release.

It carries out the reaction nicotinate + 5-phospho-alpha-D-ribose 1-diphosphate + ATP + H2O = nicotinate beta-D-ribonucleotide + ADP + phosphate + diphosphate. It participates in cofactor biosynthesis; NAD(+) biosynthesis; nicotinate D-ribonucleotide from nicotinate: step 1/1. In terms of biological role, catalyzes the synthesis of beta-nicotinate D-ribonucleotide from nicotinate and 5-phospho-D-ribose 1-phosphate at the expense of ATP. The polypeptide is Nicotinate phosphoribosyltransferase (Enterobacter sp. (strain 638)).